Reading from the N-terminus, the 1274-residue chain is Meiosis inhibitor protein 1 (1274 aa).

As to expression, expressed predominantly in testis. Weakly expressed in spleen and thymus. Expressed in the ovaries, Fallopian tubes and uterus.

Required for normal meiotic chromosome synapsis. May be involved in the formation of meiotic double-strand breaks (DSBs) in spermatocytes. The sequence is that of Meiosis inhibitor protein 1 from Homo sapiens (Human).